We begin with the raw amino-acid sequence, 449 residues long: Naphthalene 1,2-dioxygenase system, large oxygenase component (449 aa).

The Rieske domain maps to 39-137 (WLFLTHDSLI…LNKKCLGLKE (99 aa)). [2Fe-2S] cluster contacts are provided by cysteine 81, histidine 83, cysteine 101, and histidine 104. Fe cation is bound by residues histidine 208, histidine 213, and aspartate 362.

This sequence belongs to the bacterial ring-hydroxylating dioxygenase alpha subunit family. The naphthalene dioxygenase (NDO) multicomponent enzyme system is composed of an electron transfer component and a dioxygenase component (iron sulfur protein (ISP)). The electron transfer component is composed of a ferredoxin reductase (NdoR) and a ferredoxin (NdoA), and the dioxygenase component is formed of a heterohexamer (trimer of heterodimers) of three large alpha subunits (NdoB) and three small beta subunits (NdoC). [2Fe-2S] cluster serves as cofactor. Requires Fe(2+) as cofactor.

It catalyses the reaction naphthalene + NADH + O2 + H(+) = (1R,2S)-1,2-dihydronaphthalene-1,2-diol + NAD(+). Its pathway is aromatic compound metabolism; naphthalene degradation. Functionally, component of the naphthalene dioxygenase (NDO) multicomponent enzyme system which catalyzes the incorporation of both atoms of molecular oxygen into naphthalene to form cis-(1R,2S)-dihydroxy-1,2-dihydronaphthalene. The alpha subunit has a catalytic role in the holoenzyme. Also able to catalyze the cis-dihydroxylation of biphenyl and phenanthrene. The chain is Naphthalene 1,2-dioxygenase system, large oxygenase component from Pseudomonas putida (Arthrobacter siderocapsulatus).